The chain runs to 392 residues: Protein O-glucosyltransferase 1 (392 aa).

An N-terminal signal peptide occupies residues 1–23 (MERRAGSRLRAWMLLLLLCPVQG). 4 disulfides stabilise this stretch: cysteine 49–cysteine 56, cysteine 54–cysteine 357, cysteine 102–cysteine 108, and cysteine 263–cysteine 286. N-linked (GlcNAc...) asparagine glycosylation is present at asparagine 53. The interaction with the consensus sequence C-X-S-X-[PA]-C in peptide substrates stretch occupies residues 103 to 107 (MFPSR). Residue aspartate 133 is the Proton donor/acceptor of the active site. Residues 172–178 (AVWPLYP) form an interaction with the consensus sequence C-X-S-X-[PA]-C in peptide substrates region. Position 177 (tyrosine 177) interacts with UDP-alpha-D-glucose. N-linked (GlcNAc...) asparagine glycosylation is present at asparagine 204. UDP-alpha-D-glucose-binding positions include serine 212, arginine 218, and 274–279 (VAASFR). The N-linked (GlcNAc...) asparagine glycan is linked to asparagine 373. Residues 389–392 (KTEL) carry the Prevents secretion from ER motif.

Belongs to the glycosyltransferase 90 family. Widely expressed in newborn and adult tissues (at protein level).

It localises to the endoplasmic reticulum lumen. The catalysed reaction is L-seryl-[EGF-like domain protein] + UDP-alpha-D-xylose = 3-O-(beta-D-xylosyl)-L-seryl-[EGF-like domain protein] + UDP + H(+). The enzyme catalyses L-seryl-[EGF-like domain protein] + UDP-alpha-D-glucose = 3-O-(beta-D-glucosyl)-L-seryl-[EGF-like domain protein] + UDP + H(+). Its pathway is protein modification; protein glycosylation. In terms of biological role, dual specificity glycosyltransferase that catalyzes the transfer of glucose and xylose from UDP-glucose and UDP-xylose, respectively, to a serine residue found in the consensus sequence of C-X-S-X-P-C. Specifically targets extracellular EGF repeats of protein such as CRB2, F7, F9 and NOTCH2. Acts as a positive regulator of Notch signaling by mediating O-glucosylation of Notch, leading to regulate muscle development. Notch glucosylation does not affect Notch ligand binding. Required during early development to promote gastrulation: acts by mediating O-glucosylation of CRB2, which is required for CRB2 localization to the cell membrane. The polypeptide is Protein O-glucosyltransferase 1 (Mus musculus (Mouse)).